A 196-amino-acid polypeptide reads, in one-letter code: Nucleoside triphosphate pyrophosphatase (196 aa).

Aspartate 72 (proton acceptor) is an active-site residue.

It belongs to the Maf family. It depends on a divalent metal cation as a cofactor.

It localises to the cytoplasm. The enzyme catalyses a ribonucleoside 5'-triphosphate + H2O = a ribonucleoside 5'-phosphate + diphosphate + H(+). It catalyses the reaction a 2'-deoxyribonucleoside 5'-triphosphate + H2O = a 2'-deoxyribonucleoside 5'-phosphate + diphosphate + H(+). In terms of biological role, nucleoside triphosphate pyrophosphatase. May have a dual role in cell division arrest and in preventing the incorporation of modified nucleotides into cellular nucleic acids. The sequence is that of Nucleoside triphosphate pyrophosphatase from Chlamydia muridarum (strain MoPn / Nigg).